Reading from the N-terminus, the 293-residue chain is uncharacterized protein (293 aa).

The 60-residue stretch at 1 to 60 (MHITLRQLEVFAEVLKSGSTTQASVMLALSQSAVSAALTDLEGQLGVQLFDRVGKRLVVN) folds into the HTH lysR-type domain. A DNA-binding region (H-T-H motif) is located at residues 20–39 (TTQASVMLALSQSAVSAALT).

This sequence belongs to the LysR transcriptional regulatory family.

This is an uncharacterized protein from Escherichia coli O157:H7.